The sequence spans 247 residues: MSEATTTLDGWYCLHDLRSIDWAAWKTLSSDERGQAVSEFLNVVEKWNEVATAKKGSHAMYTVVGQKADIMLMILRPTMEELNEIETELNKTTLAEYMVPAYSYVSVVELSNYLPADEDPYQNPQILARLYPELPKANHICFYPMDKRRQGDDNWYMLPMEERKKMMYSHSKIGRQYAGKVRQVISGSVGFDDFEWGVTLFADDVLQFKKLIYEMRFDEVSARYGEFGTFFVGNILPDEKVEKFLHI.

Fe-coproporphyrin III is bound by residues R129, 143-147 (YPMDK), H170, Q183, and S221. Residue Y143 is part of the active site.

It belongs to the ChdC family. Type 1 subfamily. Fe-coproporphyrin III serves as cofactor.

The enzyme catalyses Fe-coproporphyrin III + 2 H2O2 + 2 H(+) = heme b + 2 CO2 + 4 H2O. It catalyses the reaction Fe-coproporphyrin III + H2O2 + H(+) = harderoheme III + CO2 + 2 H2O. It carries out the reaction harderoheme III + H2O2 + H(+) = heme b + CO2 + 2 H2O. The protein operates within porphyrin-containing compound metabolism; protoheme biosynthesis. Its function is as follows. Involved in coproporphyrin-dependent heme b biosynthesis. Catalyzes the decarboxylation of Fe-coproporphyrin III (coproheme) to heme b (protoheme IX), the last step of the pathway. The reaction occurs in a stepwise manner with a three-propionate intermediate. The chain is Coproheme decarboxylase from Bacillus cereus (strain B4264).